Here is a 300-residue protein sequence, read N- to C-terminus: Protein XRI1 (300 aa).

In terms of assembly, interacts (via C-terminal domain) with MIP1.

Its subcellular location is the nucleus. Its function is as follows. Required for mitotic division of the generative cell nucleus and the development of mature tricellular pollen grains, and for male and female meiosis. This chain is Protein XRI1 (XRI1), found in Arabidopsis thaliana (Mouse-ear cress).